A 180-amino-acid polypeptide reads, in one-letter code: Hypoxanthine-guanine phosphoribosyltransferase (180 aa).

Residues lysine 43 and glycine 44 each contribute to the diphosphate site. The Mg(2+) site is built by glutamate 99 and aspartate 100. The active-site Proton acceptor is the aspartate 103. GMP is bound by residues lysine 131, 152–153, and aspartate 159; that span reads FI. Residue arginine 165 coordinates diphosphate.

This sequence belongs to the purine/pyrimidine phosphoribosyltransferase family. Requires Mg(2+) as cofactor.

It localises to the cytoplasm. The catalysed reaction is IMP + diphosphate = hypoxanthine + 5-phospho-alpha-D-ribose 1-diphosphate. The enzyme catalyses GMP + diphosphate = guanine + 5-phospho-alpha-D-ribose 1-diphosphate. It participates in purine metabolism; IMP biosynthesis via salvage pathway; IMP from hypoxanthine: step 1/1. Its pathway is purine metabolism; GMP biosynthesis via salvage pathway; GMP from guanine: step 1/1. Purine salvage pathway enzyme that catalyzes the transfer of the ribosyl-5-phosphate group from 5-phospho-alpha-D-ribose 1-diphosphate (PRPP) to the N9 position of the 6-oxopurines hypoxanthine and guanine to form the corresponding ribonucleotides IMP (inosine 5'-monophosphate) and GMP (guanosine 5'-monophosphate), with the release of PPi. This chain is Hypoxanthine-guanine phosphoribosyltransferase (hpt), found in Streptococcus mutans serotype c (strain ATCC 700610 / UA159).